The chain runs to 102 residues: Small ribosomal subunit protein uS10 (102 aa).

Belongs to the universal ribosomal protein uS10 family. As to quaternary structure, part of the 30S ribosomal subunit.

Involved in the binding of tRNA to the ribosomes. This is Small ribosomal subunit protein uS10 from Brucella abortus (strain S19).